A 368-amino-acid polypeptide reads, in one-letter code: ATP-dependent (S)-NAD(P)H-hydrate dehydratase (368 aa).

The YjeF C-terminal domain occupies 13–357; that stretch reads LFKKVRKIVP…DEVHESFLEL (345 aa). (6S)-NADPHX is bound by residues glycine 125 and 178 to 184; that span reads NVNEFSR. ATP-binding positions include 231-235 and 250-259; these read KGPHD and GGLKRSGGQG. Aspartate 260 lines the (6S)-NADPHX pocket.

This sequence belongs to the NnrD/CARKD family. It depends on Mg(2+) as a cofactor.

The protein resides in the cytoplasm. It carries out the reaction (6S)-NADHX + ATP = ADP + phosphate + NADH + H(+). It catalyses the reaction (6S)-NADPHX + ATP = ADP + phosphate + NADPH + H(+). Catalyzes the dehydration of the S-form of NAD(P)HX at the expense of ATP, which is converted to ADP. Together with NAD(P)HX epimerase, which catalyzes the epimerization of the S- and R-forms, the enzyme allows the repair of both epimers of NAD(P)HX, a damaged form of NAD(P)H that is a result of enzymatic or heat-dependent hydration. In Aspergillus fumigatus (strain ATCC MYA-4609 / CBS 101355 / FGSC A1100 / Af293) (Neosartorya fumigata), this protein is ATP-dependent (S)-NAD(P)H-hydrate dehydratase.